We begin with the raw amino-acid sequence, 1177 residues long: MWRWIRQQLGFDPPHQSDTRTIYVANRFPQNGLYTPQKFIDNRIISSKYTVWNFVPKNLFEQFRRVANFYFLIIFLVQLMIDTPTSPVTSGLPLFFVITVTAIKQGYEDWLRHNSDNEVNGAPVYVVRSGGLVKTRSKNIRVGDIVRIAKDEIFPADLVLLSSDRLDGSCHVTTASLDGETNLKTHVAVPETALLQTVANLDTLVAVIECQQPEADLYRFMGRMIITQQMEEIVRPLGPESLLLRGARLKNTKEIFGVAVYTGMETKMALNYKSKSQKRSAVEKSMNTFLIIYLVILISEAVISTILKYTWQAEEKWDEPWYNQKTEHQRNSSKILRFISDFLAFLVLYNFIIPISLYVTVEMQKFLGSFFIGWDLDLYHEESDQKAQVNTSDLNEELGQVEYVFTDKTGTLTENEMQFRECSINGMKYQEINGRLVPEGPTPDSSEGNLSYLSSLSHLNNLSHLTTSSSFRTSPENETELIKEHDLFFKAVSLCHTVQISNVQTDCTGDGPWQSNLAPSQLEYYASSPDEKALVEAAARIGIVFIGNSEETMEVKTLGKLERYKLLHILEFDSDRRRMSVIVQAPSGEKLLFAKGAESSILPKCIGGEIEKTRIHVDEFALKGLRTLCIAYRKFTSKEYEEIDKRIFEARTALQQREEKLAAVFQFIEKDLILLGATAVEDRLQDKVRETIEALRMAGIKVWVLTGDKHETAVSVSLSCGHFHRTMNILELINQKSDSECAEQLRQLARRITEDHVIQHGLVVDGTSLSLALREHEKLFMEVCRNCSAVLCCRMAPLQKAKVIRLIKISPEKPITLAVGDGANDVSMIQEAHVGIGIMGKEGRQAARNSDYAIARFKFLSKLLFVHGHFYYIRIATLVQYFFYKNVCFITPQFLYQFYCLFSQQTLYDSVYLTLYNICFTSLPILIYSLLEQHVDPHVLQNKPTLYRDISKNRLLSIKTFLYWTILGFSHAFIFFFGSYLLIGKDTSLLGNGQMFGNWTFGTLVFTVMVITVTVKMALETHFWTWINHLVTWGSIIFYFVFSLFYGGILWPFLGSQNMYFVFIQLLSSGSAWFAIILMVVTCLFLDIIKKVFDRHLHPTSTEKAQLTETNAGIKCLDSMCCFPEGEAACASVGRMLERVIGRCSPTHISRSWSASDPFYTNDRSILTLSTMDSSTC.

Residues methionine 1–valine 55 lie on the Cytoplasmic side of the membrane. A helical transmembrane segment spans residues proline 56 to valine 77. At glutamine 78–aspartate 82 the chain is on the extracellular side. Residues threonine 83–lysine 104 traverse the membrane as a helical segment. The Cytoplasmic portion of the chain corresponds to glutamine 105–phenylalanine 289. A helical transmembrane segment spans residues leucine 290–tryptophan 311. At glutamine 312–aspartate 341 the chain is on the extracellular side. Residues phenylalanine 342–valine 359 form a helical membrane-spanning segment. Residues threonine 360 to alanine 876 lie on the Cytoplasmic side of the membrane. Catalysis depends on aspartate 407, which acts as the 4-aspartylphosphate intermediate. ATP-binding residues include aspartate 407, lysine 408, threonine 409, glutamate 531, phenylalanine 572, lysine 595, arginine 626, threonine 706, glycine 707, aspartate 708, arginine 794, and lysine 800. Residue aspartate 407 coordinates Mg(2+). Threonine 409 contributes to the Mg(2+) binding site. Aspartate 821 provides a ligand contact to Mg(2+). Positions 824 and 825 each coordinate ATP. Mg(2+) is bound at residue aspartate 825. A helical transmembrane segment spans residues threonine 877–phenylalanine 898. The Extracellular portion of the chain corresponds to tyrosine 899 to serine 910. Residues valine 911–leucine 930 traverse the membrane as a helical segment. The Cytoplasmic segment spans residues leucine 931–threonine 960. A helical membrane pass occupies residues phenylalanine 961–leucine 982. Over isoleucine 983–glycine 997 the chain is Extracellular. Residues asparagine 998–glutamate 1020 form a helical membrane-spanning segment. At threonine 1021 to threonine 1025 the chain is on the cytoplasmic side. Residues tryptophan 1026–glycine 1047 traverse the membrane as a helical segment. Residues glycine 1048–glutamine 1065 are Extracellular-facing. The chain crosses the membrane as a helical span at residues leucine 1066 to lysine 1090. Residues lysine 1091 to cysteine 1177 lie on the Cytoplasmic side of the membrane. A Phosphoserine modification is found at serine 1154.

It belongs to the cation transport ATPase (P-type) (TC 3.A.3) family. Type IV subfamily. Component of a P4-ATPase flippase complex which consists of a catalytic alpha subunit ATP11B and an accessory beta subunit TMEM30A. The cofactor is Mg(2+).

It is found in the recycling endosome membrane. Its subcellular location is the early endosome. The protein resides in the endoplasmic reticulum. The protein localises to the golgi apparatus. It localises to the trans-Golgi network. The catalysed reaction is ATP + H2O + phospholipidSide 1 = ADP + phosphate + phospholipidSide 2.. It catalyses the reaction a 1,2-diacyl-sn-glycero-3-phospho-L-serine(out) + ATP + H2O = a 1,2-diacyl-sn-glycero-3-phospho-L-serine(in) + ADP + phosphate + H(+). The enzyme catalyses a 1,2-diacyl-sn-glycero-3-phosphoethanolamine(out) + ATP + H2O = a 1,2-diacyl-sn-glycero-3-phosphoethanolamine(in) + ADP + phosphate + H(+). Its activity is regulated as follows. The ATPase activity is up-regulated by aminophospholipids PS and PE. Catalytic component of a P4-ATPase flippase complex which catalyzes the hydrolysis of ATP coupled to the transport of aminophospholipids, phosphatidylserines (PS) and phosphatidylethanolamines (PE), from the outer to the inner leaflet of intracellular membranes. May contribute to the maintenance of membrane lipid asymmetry in endosome compartment. This Homo sapiens (Human) protein is Phospholipid-transporting ATPase IF (ATP11B).